The chain runs to 589 residues: ATP-dependent lipid A-core flippase (589 aa).

The next 5 membrane-spanning stretches (helical) occupy residues 29-49 (LLLVAALIAALIEAAGTTGFL), 70-90 (WLPVQIILLFVVRGVAGYITD), 157-177 (VIGALALMLWHSWQVTLTILV), 261-281 (MIGAIGLSALLFVAGAQALAG), and 283-303 (LTAGDFVVLMTSMLTIIPGLK). Positions 32 to 314 (VAALIAALIE…LTNVQNMVQR (283 aa)) constitute an ABC transmembrane type-1 domain. The ABC transporter domain occupies 346–582 (IEFRDVTARY…GGLYSHLHGM (237 aa)). Position 380-387 (380-387 (GRSGSGKS)) interacts with ATP.

It belongs to the ABC transporter superfamily. Lipid exporter (TC 3.A.1.106) family. In terms of assembly, homodimer.

The protein localises to the cell inner membrane. The catalysed reaction is ATP + H2O + lipid A-core oligosaccharideSide 1 = ADP + phosphate + lipid A-core oligosaccharideSide 2.. Involved in lipopolysaccharide (LPS) biosynthesis. Translocates lipid A-core from the inner to the outer leaflet of the inner membrane. Transmembrane domains (TMD) form a pore in the inner membrane and the ATP-binding domain (NBD) is responsible for energy generation. In Xanthomonas euvesicatoria pv. vesicatoria (strain 85-10) (Xanthomonas campestris pv. vesicatoria), this protein is ATP-dependent lipid A-core flippase.